The primary structure comprises 227 residues: Cytochrome c oxidase subunit 2 (227 aa).

Over 1–14 the chain is Mitochondrial intermembrane; it reads MAYPFQLGLQDATS. Residues 15–45 traverse the membrane as a helical segment; sequence PIMEELLHFHDHTLMIVFLISSLVLYIISSM. Residues 46–59 lie on the Mitochondrial matrix side of the membrane; that stretch reads LTTKLTHTSTMDAQ. A helical transmembrane segment spans residues 60 to 87; the sequence is EVETVWTILPAIILVLIALPSLRILYMM. Over 88–227 the chain is Mitochondrial intermembrane; it reads DEINNPSLTV…YFETWSALML (140 aa). 6 residues coordinate Cu cation: His161, Cys196, Glu198, Cys200, His204, and Met207. Glu198 provides a ligand contact to Mg(2+). Position 218 is a phosphotyrosine (Tyr218).

This sequence belongs to the cytochrome c oxidase subunit 2 family. As to quaternary structure, component of the cytochrome c oxidase (complex IV, CIV), a multisubunit enzyme composed of 14 subunits. The complex is composed of a catalytic core of 3 subunits MT-CO1, MT-CO2 and MT-CO3, encoded in the mitochondrial DNA, and 11 supernumerary subunits COX4I, COX5A, COX5B, COX6A, COX6B, COX6C, COX7A, COX7B, COX7C, COX8 and NDUFA4, which are encoded in the nuclear genome. The complex exists as a monomer or a dimer and forms supercomplexes (SCs) in the inner mitochondrial membrane with NADH-ubiquinone oxidoreductase (complex I, CI) and ubiquinol-cytochrome c oxidoreductase (cytochrome b-c1 complex, complex III, CIII), resulting in different assemblies (supercomplex SCI(1)III(2)IV(1) and megacomplex MCI(2)III(2)IV(2)). Found in a complex with TMEM177, COA6, COX18, COX20, SCO1 and SCO2. Interacts with TMEM177 in a COX20-dependent manner. Interacts with COX20. Interacts with COX16. Cu cation serves as cofactor.

The protein resides in the mitochondrion inner membrane. The enzyme catalyses 4 Fe(II)-[cytochrome c] + O2 + 8 H(+)(in) = 4 Fe(III)-[cytochrome c] + 2 H2O + 4 H(+)(out). In terms of biological role, component of the cytochrome c oxidase, the last enzyme in the mitochondrial electron transport chain which drives oxidative phosphorylation. The respiratory chain contains 3 multisubunit complexes succinate dehydrogenase (complex II, CII), ubiquinol-cytochrome c oxidoreductase (cytochrome b-c1 complex, complex III, CIII) and cytochrome c oxidase (complex IV, CIV), that cooperate to transfer electrons derived from NADH and succinate to molecular oxygen, creating an electrochemical gradient over the inner membrane that drives transmembrane transport and the ATP synthase. Cytochrome c oxidase is the component of the respiratory chain that catalyzes the reduction of oxygen to water. Electrons originating from reduced cytochrome c in the intermembrane space (IMS) are transferred via the dinuclear copper A center (CU(A)) of subunit 2 and heme A of subunit 1 to the active site in subunit 1, a binuclear center (BNC) formed by heme A3 and copper B (CU(B)). The BNC reduces molecular oxygen to 2 water molecules using 4 electrons from cytochrome c in the IMS and 4 protons from the mitochondrial matrix. The sequence is that of Cytochrome c oxidase subunit 2 (MT-CO2) from Speothos venaticus (Bush dog).